The following is a 170-amino-acid chain: Superoxide dismutase [Fe] (170 aa).

Positions 27, 81, 163, and 167 each coordinate Fe cation.

This sequence belongs to the iron/manganese superoxide dismutase family. Homodimer. Requires Fe cation as cofactor.

The enzyme catalyses 2 superoxide + 2 H(+) = H2O2 + O2. Its function is as follows. Destroys superoxide anion radicals which are normally produced within the cells and which are toxic to biological systems. The polypeptide is Superoxide dismutase [Fe] (sodA) (Raoultella planticola (Klebsiella planticola)).